Here is a 503-residue protein sequence, read N- to C-terminus: Ribose import ATP-binding protein RbsA (503 aa).

ABC transporter domains follow at residues 10 to 246 (LEVR…VGRD) and 256 to 500 (VEPG…TGSE). An ATP-binding site is contributed by 42–49 (GENGAGKS).

Belongs to the ABC transporter superfamily. Ribose importer (TC 3.A.1.2.1) family. As to quaternary structure, the complex is composed of an ATP-binding protein (RbsA), two transmembrane proteins (RbsC) and a solute-binding protein (RbsB).

It localises to the cell membrane. The catalysed reaction is D-ribose(out) + ATP + H2O = D-ribose(in) + ADP + phosphate + H(+). Part of the ABC transporter complex RbsABC involved in ribose import. Responsible for energy coupling to the transport system. The chain is Ribose import ATP-binding protein RbsA from Rhodococcus jostii (strain RHA1).